The chain runs to 117 residues: Nascent polypeptide-associated complex protein (117 aa).

Residues 3 to 72 (PVNPRDLEKM…YTVEKPREET (70 aa)) form the NAC-A/B domain.

Belongs to the NAC-alpha family. Homodimer. Interacts with the ribosome. Binds ribosomal RNA.

Contacts the emerging nascent chain on the ribosome. The protein is Nascent polypeptide-associated complex protein of Aeropyrum pernix (strain ATCC 700893 / DSM 11879 / JCM 9820 / NBRC 100138 / K1).